The following is a 493-amino-acid chain: ATP synthase subunit beta (493 aa).

ATP is bound at residue 169–176; it reads GGAGVGKT.

Belongs to the ATPase alpha/beta chains family. F-type ATPases have 2 components, CF(1) - the catalytic core - and CF(0) - the membrane proton channel. CF(1) has five subunits: alpha(3), beta(3), gamma(1), delta(1), epsilon(1). CF(0) has three main subunits: a(1), b(2) and c(9-12). The alpha and beta chains form an alternating ring which encloses part of the gamma chain. CF(1) is attached to CF(0) by a central stalk formed by the gamma and epsilon chains, while a peripheral stalk is formed by the delta and b chains.

The protein localises to the cell inner membrane. It catalyses the reaction ATP + H2O + 4 H(+)(in) = ADP + phosphate + 5 H(+)(out). Produces ATP from ADP in the presence of a proton gradient across the membrane. The catalytic sites are hosted primarily by the beta subunits. The chain is ATP synthase subunit beta from Gluconacetobacter diazotrophicus (strain ATCC 49037 / DSM 5601 / CCUG 37298 / CIP 103539 / LMG 7603 / PAl5).